The primary structure comprises 149 residues: Heavy metal-associated isoprenylated plant protein 21 (149 aa).

In terms of domain architecture, HMA spans 25 to 88 (LQTVDIKVKM…RVKSTGKKAE (64 aa)). Residues cysteine 36 and cysteine 39 each coordinate a metal cation. Cysteine 146 is subject to Cysteine methyl ester. A lipid anchor (S-farnesyl cysteine) is attached at cysteine 146. The propeptide at 147–149 (SIM) is removed in mature form.

Belongs to the HIPP family. As to quaternary structure, interacts with ZHD11/HB29. As to expression, expressed at low levels in leaves and sepals.

The protein localises to the membrane. Functionally, heavy-metal-binding protein. Binds cadmium. May be involved in cadmium transport and play a role in cadmium detoxification. This is Heavy metal-associated isoprenylated plant protein 21 from Arabidopsis thaliana (Mouse-ear cress).